We begin with the raw amino-acid sequence, 421 residues long: CaM kinase-like vesicle-associated protein (421 aa).

Residues 24–284 (YDLGQVVKSE…AQEAIAHEWI (261 aa)) enclose the Protein kinase domain. The segment at 326–421 (ASEQGDTGAS…PQMLPQRKGY (96 aa)) is disordered. 2 stretches are compositionally biased toward low complexity: residues 330-340 (GDTGASGLAAG) and 390-406 (QQQA…QQAR).

It belongs to the protein kinase superfamily. CAMK Ser/Thr protein kinase family. Interacts with calmodulin, in the presence of calcium. The cofactor is Ca(2+). In terms of tissue distribution, ubiquitously expressed.

It is found in the cytoplasmic vesicle membrane. Its function is as follows. Does not appear to have detectable kinase activity. The chain is CaM kinase-like vesicle-associated protein (camkv) from Takifugu rubripes (Japanese pufferfish).